Consider the following 463-residue polypeptide: NEDD8-activating enzyme E1 catalytic subunit (463 aa).

The residue at position 2 (A2) is an N-acetylalanine. An interaction with UBE2M N-terminus region spans residues 53-70; it reads HPDFEPSTESLQFLLDTC. ATP-binding positions include 100-124 and 148-171; these read DMDT…GRPK and IQDF…SIIA. Interaction with UBE2M N-terminus regions lie at residues 157–161 and 192–217; these read RQFHI and PSSI…LPGM. Residues 227–229 are interaction with NEDD8; it reads LYP. The active-site Glycyl thioester intermediate is the C237. 2 interaction with NAE1 regions span residues 242 to 248 and 292 to 295; these read MPRLPEH and YNIR. Residues 331-338 are interaction with UBE2M N-terminus; it reads IATSAYIP. The interval 352-357 is interaction with NEDD8; it reads YTYTFE. An interaction with UBE2M core domain region spans residues 368–463; the sequence is SQLPQNIQFS…TVLFKLHFTS (96 aa).

It belongs to the ubiquitin-activating E1 family. UBA3 subfamily. As to quaternary structure, heterodimer of UBA3 and NAE1. Interacts with NEDD8, UBE2F and UBE2M. Binds ESR1 and ESR2 with bound steroid ligand. Interacts with TBATA. In terms of tissue distribution, ubiquitously expressed.

The enzyme catalyses ATP + [NEDD8 protein] + [E1 NEDD8-activating enzyme]-L-cysteine = AMP + diphosphate + [E1 NEDD8-activating enzyme]-S-[NEDD8 protein]-yl-L-cysteine.. Its pathway is protein modification; protein neddylation. Binding of TP53BP2 to the regulatory subunit NAE1 decreases activity. In terms of biological role, catalytic subunit of the dimeric UBA3-NAE1 E1 enzyme. E1 activates NEDD8 by first adenylating its C-terminal glycine residue with ATP, thereafter linking this residue to the side chain of the catalytic cysteine, yielding a NEDD8-UBA3 thioester and free AMP. E1 finally transfers NEDD8 to the catalytic cysteine of UBE2M. Down-regulates steroid receptor activity. Necessary for cell cycle progression. The polypeptide is NEDD8-activating enzyme E1 catalytic subunit (UBA3) (Homo sapiens (Human)).